Here is a 707-residue protein sequence, read N- to C-terminus: Choline transporter-like protein 4 (707 aa).

Residues 1-33 are Cytoplasmic-facing; it reads MGGKQDQDKEAYGKPAKYDPSFRGPIRNRSCTD. The helical transmembrane segment at 34 to 54 threads the bilayer; it reads IICCVLFFLFILGYIAVGILA. Residues 55 to 227 lie on the Extracellular side of the membrane; the sequence is WVYGDPKQVL…KIFEDFAQSW (173 aa). N-linked (GlcNAc...) asparagine glycosylation is found at N68, N185, and N196. The helical transmembrane segment at 228-248 threads the bilayer; it reads YWILIALGLALVLSLLFILLL. At 249 to 250 the chain is on the cytoplasmic side; sequence RL. A helical membrane pass occupies residues 251-271; that stretch reads VAGPLVFVLIIGVLGVLAYGI. Residues 272 to 307 lie on the Extracellular side of the membrane; the sequence is YHCWEEYRVLRDKGASISQLGFTTNLSAYRNVQETW. N-linked (GlcNAc...) asparagine glycosylation is present at N296. The chain crosses the membrane as a helical span at residues 308 to 328; that stretch reads LAALIILAVLEGVLLLMLIFL. Residues 329 to 356 are Cytoplasmic-facing; sequence RQRICIAIALLKEASRAVGYIMSTMFYP. The chain crosses the membrane as a helical span at residues 357–377; the sequence is LVTFALLLVCIAYWAIIALFL. Residues 378 to 452 lie on the Extracellular side of the membrane; it reads ATSGQPQYVF…AVLGLFWTIN (75 aa). N-linked (GlcNAc...) asparagine glycosylation is found at N391, N403, and N413. Residues 453–473 form a helical membrane-spanning segment; the sequence is WVLALGQCVLAGAFASFYWAF. Residues 474-498 are Cytoplasmic-facing; sequence HKPRDIPTFPLGSAFLRTLRYHTGS. A helical transmembrane segment spans residues 499-519; the sequence is LAFGALILTLVQIARVILEYI. Residues 520–557 are Extracellular-facing; sequence DHKLRGAQNPLTRCILCCFKCCLWCLEKFIKFLNRNAY. A helical transmembrane segment spans residues 558–578; the sequence is IMIAIYGKNFCVSAKNAFMLL. The Cytoplasmic portion of the chain corresponds to 579 to 594; sequence MRNIVRVVVLDKVTDL. Residues 595–615 form a helical membrane-spanning segment; the sequence is LLFFGKLLVVGGVGVLSFFFF. Over 616–635 the chain is Extracellular; it reads TGRIPSLGKTFENPQLNYYW. The helical transmembrane segment at 636–656 threads the bilayer; it reads LPIMVSILGAYLIASGFFSVF. The Cytoplasmic portion of the chain corresponds to 657 to 707; sequence GMCVDTLFLCFLEDLERNDGSADRPYYMSKSLLKILGKKNKGTPGDKKRKK.

The protein belongs to the CTL (choline transporter-like) family. N-glycosylated; N-glycosylation of Asn-68 and Asn-391 is required for a proper thiamine pyrophosphate uptake.

Its subcellular location is the membrane. It is found in the apical cell membrane. The enzyme catalyses choline(out) + n H(+)(in) = choline(in) + n H(+)(out). It catalyses the reaction thiamine diphosphate(out) = thiamine diphosphate(in). Choline transporter that plays a role in the choline-acetylcholine system and is required to the efferent innervation of hair cells in the olivocochlear bundle for the maintenance of physiological function of outer hair cells and the protection of hair cells from acoustic injury. Also described as a thiamine pyrophosphate transporter in colon, may mediate the absorption of microbiota-generated thiamine pyrophosphate and contribute to host thiamine (vitamin B1) homeostasis. This chain is Choline transporter-like protein 4, found in Bos taurus (Bovine).